Reading from the N-terminus, the 226-residue chain is Octanoyltransferase (226 aa).

The BPL/LPL catalytic domain maps to 34 to 216 (GEANELVWLL…AWTEAFGPVR (183 aa)). Residues 73–80 (RGGEYTYH), 145–147 (AIG), and 158–160 (GIA) contribute to the substrate site. Catalysis depends on Cys-176, which acts as the Acyl-thioester intermediate.

The protein belongs to the LipB family.

Its subcellular location is the cytoplasm. It carries out the reaction octanoyl-[ACP] + L-lysyl-[protein] = N(6)-octanoyl-L-lysyl-[protein] + holo-[ACP] + H(+). It participates in protein modification; protein lipoylation via endogenous pathway; protein N(6)-(lipoyl)lysine from octanoyl-[acyl-carrier-protein]: step 1/2. Catalyzes the transfer of endogenously produced octanoic acid from octanoyl-acyl-carrier-protein onto the lipoyl domains of lipoate-dependent enzymes. Lipoyl-ACP can also act as a substrate although octanoyl-ACP is likely to be the physiological substrate. The sequence is that of Octanoyltransferase from Maricaulis maris (strain MCS10) (Caulobacter maris).